Here is a 164-residue protein sequence, read N- to C-terminus: MDLITPEIGLFFWQTIVFLILLFLMAKFAWKPILGSVRNREQSINDALASAEKARKEMQNLQSDNEQLLKEARAERDAILKEARELKEKVITDASDEAKVKADKIVADAKRSIELEKQSAMAELKNHVAELSVEIAEKIVRKELSGKNEQHQMIEKMIGDAKLN.

Residues 8–28 (IGLFFWQTIVFLILLFLMAKF) traverse the membrane as a helical segment.

Belongs to the ATPase B chain family. F-type ATPases have 2 components, F(1) - the catalytic core - and F(0) - the membrane proton channel. F(1) has five subunits: alpha(3), beta(3), gamma(1), delta(1), epsilon(1). F(0) has three main subunits: a(1), b(2) and c(10-14). The alpha and beta chains form an alternating ring which encloses part of the gamma chain. F(1) is attached to F(0) by a central stalk formed by the gamma and epsilon chains, while a peripheral stalk is formed by the delta and b chains.

It localises to the cell membrane. F(1)F(0) ATP synthase produces ATP from ADP in the presence of a proton or sodium gradient. F-type ATPases consist of two structural domains, F(1) containing the extramembraneous catalytic core and F(0) containing the membrane proton channel, linked together by a central stalk and a peripheral stalk. During catalysis, ATP synthesis in the catalytic domain of F(1) is coupled via a rotary mechanism of the central stalk subunits to proton translocation. Its function is as follows. Component of the F(0) channel, it forms part of the peripheral stalk, linking F(1) to F(0). In Christiangramia forsetii (strain DSM 17595 / CGMCC 1.15422 / KT0803) (Gramella forsetii), this protein is ATP synthase subunit b.